Here is a 340-residue protein sequence, read N- to C-terminus: 4-hydroxy-3-methylbut-2-enyl diphosphate reductase (340 aa).

Cys18 is a [4Fe-4S] cluster binding site. 2 residues coordinate (2E)-4-hydroxy-3-methylbut-2-enyl diphosphate: His47 and His83. Residues His47 and His83 each coordinate dimethylallyl diphosphate. Isopentenyl diphosphate is bound by residues His47 and His83. Cys105 is a binding site for [4Fe-4S] cluster. (2E)-4-hydroxy-3-methylbut-2-enyl diphosphate is bound at residue His133. Position 133 (His133) interacts with dimethylallyl diphosphate. His133 contacts isopentenyl diphosphate. Residue Glu135 is the Proton donor of the active site. Thr174 contacts (2E)-4-hydroxy-3-methylbut-2-enyl diphosphate. Cys204 is a [4Fe-4S] cluster binding site. Positions 232, 233, 234, and 277 each coordinate (2E)-4-hydroxy-3-methylbut-2-enyl diphosphate. Dimethylallyl diphosphate-binding residues include Ser232, Ser233, Asn234, and Ser277. Isopentenyl diphosphate is bound by residues Ser232, Ser233, Asn234, and Ser277.

The protein belongs to the IspH family. [4Fe-4S] cluster serves as cofactor.

The catalysed reaction is isopentenyl diphosphate + 2 oxidized [2Fe-2S]-[ferredoxin] + H2O = (2E)-4-hydroxy-3-methylbut-2-enyl diphosphate + 2 reduced [2Fe-2S]-[ferredoxin] + 2 H(+). It catalyses the reaction dimethylallyl diphosphate + 2 oxidized [2Fe-2S]-[ferredoxin] + H2O = (2E)-4-hydroxy-3-methylbut-2-enyl diphosphate + 2 reduced [2Fe-2S]-[ferredoxin] + 2 H(+). It participates in isoprenoid biosynthesis; dimethylallyl diphosphate biosynthesis; dimethylallyl diphosphate from (2E)-4-hydroxy-3-methylbutenyl diphosphate: step 1/1. The protein operates within isoprenoid biosynthesis; isopentenyl diphosphate biosynthesis via DXP pathway; isopentenyl diphosphate from 1-deoxy-D-xylulose 5-phosphate: step 6/6. Catalyzes the conversion of 1-hydroxy-2-methyl-2-(E)-butenyl 4-diphosphate (HMBPP) into a mixture of isopentenyl diphosphate (IPP) and dimethylallyl diphosphate (DMAPP). Acts in the terminal step of the DOXP/MEP pathway for isoprenoid precursor biosynthesis. The protein is 4-hydroxy-3-methylbut-2-enyl diphosphate reductase of Bartonella quintana (strain Toulouse) (Rochalimaea quintana).